Here is a 520-residue protein sequence, read N- to C-terminus: MEVLESGEQGVLQWDRKLSELSEPGDGEALMYHTHFSELLDEFSQNVLGQLLNDPFLSEKSVSMEVEPSPTSPAPLIQAEHSYSLCEEPRAQSPFTHITTSDSFNDDEVESEKWYLSTDFPSTSIKTEPVTDEPPPGLVPSVTLTITAISTPLEKEEPPLEMNTGVDSSCQTIIPKIKLEPHEVDQFLNFSPKEAPVDHLHLPPTPPSSHGSDSEGSLSPNPRLHPFSLPQTHSPSRAAPRAPSALSSSPLLTAPHKLQGSGPLVLTEEEKRTLIAEGYPIPTKLPLSKSEEKALKKIRRKIKNKISAQESRRKKKEYMDSLEKKVESCSTENLELRKKVEVLENTNRTLLQQLQKLQTLVMGKVSRTCKLAGTQTGTCLMVVVLCFAVAFGSFFQGYGPYPSATKMALPSQHSLQEPYTASVVRSRNLLIYEEHSPPEESSSPGSAGELGGWDRGSSLLRVSGLESRPDVDLPHFIISNETSLEKSVLLELQQHLVSAKLEGNETLKVVELDRRVNTTF.

Over 1–379 the chain is Cytoplasmic; sequence MEVLESGEQG…KLAGTQTGTC (379 aa). Serine 93 carries the phosphoserine modification. A Glycyl lysine isopeptide (Lys-Gly) (interchain with G-Cter in SUMO2) cross-link involves residue lysine 178. Serine 191 is subject to Phosphoserine. The tract at residues 195 to 264 is disordered; that stretch reads APVDHLHLPP…PHKLQGSGPL (70 aa). Low complexity-rich tracts occupy residues 208–220 and 234–255; these read SSHGSDSEGSLSP and SPSRAAPRAPSALSSSPLLTAP. A bZIP domain is found at 294 to 357; the sequence is ALKKIRRKIK…RTLLQQLQKL (64 aa). The interval 296-325 is basic motif; sequence KKIRRKIKNKISAQESRRKKKEYMDSLEKK. The interval 336–357 is leucine-zipper; sequence LRKKVEVLENTNRTLLQQLQKL. Residues 380-400 form a helical; Signal-anchor for type II membrane protein membrane-spanning segment; the sequence is LMVVVLCFAVAFGSFFQGYGP. The Lumenal segment spans residues 401–520; it reads YPSATKMALP…ELDRRVNTTF (120 aa). An S1P recognition motif is present at residues 427 to 430; it reads RNLL. N-linked (GlcNAc...) asparagine glycosylation is found at asparagine 480, asparagine 504, and asparagine 517.

It belongs to the bZIP family. ATF subfamily. In terms of assembly, binds DNA as a dimer. In terms of processing, upon ER stress, translocated to the Golgi apparatus, where it is processed by regulated intramembrane proteolysis (RIP) to release the cytosol-facing N-terminal transcription factor domain. The cleavage is performed sequentially by site-1 and site-2 proteases (S1P/MBTPS1 and S2P/MBTPS2). N-glycosylated. Post-translationally, ubiquitinated by HRD1/SYVN1; undergoes 'Lys-48'-linked ubiquitination, followed by rapid proteasomal degradation under normal conditions. Upon ER stress, SYVN1 E3 ubiquitin-protein ligase dissociates from its substrate, ubiquitination does not occur and CREB3L2 is stabilized. Widely expressed with highest levels in placenta, lung, spleen and intestine, and lowest levels in heart, brain, skeletal muscle, thymus, colon and leukocytes. In fetal tissues, the weakest expression is detected in brain and heart.

Its subcellular location is the endoplasmic reticulum membrane. The protein localises to the nucleus. Transcription factor involved in unfolded protein response (UPR). In the absence of endoplasmic reticulum (ER) stress, inserted into ER membranes, with N-terminal DNA-binding and transcription activation domains oriented toward the cytosolic face of the membrane. In response to ER stress, transported to the Golgi, where it is cleaved in a site-specific manner by resident proteases S1P/MBTPS1 and S2P/MBTPS2. The released N-terminal cytosolic domain is translocated to the nucleus to effect transcription of specific target genes. Plays a critical role in chondrogenesis by activating the transcription of SEC23A, which promotes the transport and secretion of cartilage matrix proteins, and possibly that of ER biogenesis-related genes. In a neuroblastoma cell line, protects cells from ER stress-induced death. In vitro activates transcription of target genes via direct binding to the CRE site. The sequence is that of Cyclic AMP-responsive element-binding protein 3-like protein 2 (CREB3L2) from Homo sapiens (Human).